The sequence spans 467 residues: Peptidoglycan-N-acetylmuramic acid deacetylase PdaC (467 aa).

Residues 6–26 form a helical membrane-spanning segment; the sequence is IKWFHVLIAVVCVVGLIGFFH. A NodB homology domain is found at 278–452; sequence KVIALTFDDG…KLTDQGYQLV (175 aa). Asp285 acts as the Proton acceptor in catalysis. A divalent metal cation is bound by residues Asp286, His336, and His340. His427 functions as the Proton donor in the catalytic mechanism.

In the N-terminal section; belongs to the RsiV family. This sequence in the C-terminal section; belongs to the polysaccharide deacetylase family.

It localises to the cell membrane. Its activity is regulated as follows. Activated by divalent metal cations; Mn(2+) is the most efficient, followed by Ca(2+) and Mg(2+). In contrast to PgdA from S.pneumoniae, these ions are not absolutely required for deacetylase activity. In terms of biological role, catalyzes the deacetylation of N-acetylmuramic acid (MurNAc) residues in peptidoglycan, a modification that confers resistance to lysosyme. Is not able to deacetylate N-acetylglucosamine (GlcNAc) residues in peptidoglycan, but can deacylate chitin oligomers such as GlcNAc4 and GlcNAc5. Is essentially not active toward chitosan (partially deacetylated GlcNAc polymer) and has very low activity toward chitin (GlcNAc polymer). Does not deacetylate GlcNAc. In Bacillus subtilis (strain 168), this protein is Peptidoglycan-N-acetylmuramic acid deacetylase PdaC (pdaC).